We begin with the raw amino-acid sequence, 334 residues long: Nucleoid-associated protein Pfl01_0983 (334 aa).

Belongs to the YejK family.

It is found in the cytoplasm. Its subcellular location is the nucleoid. The polypeptide is Nucleoid-associated protein Pfl01_0983 (Pseudomonas fluorescens (strain Pf0-1)).